A 109-amino-acid polypeptide reads, in one-letter code: uncharacterized protein (109 aa).

Residues 36 to 109 (NSSNNLNNNN…KKKKKKRRVK (74 aa)) form a disordered region. Low complexity predominate over residues 39–88 (NNLNNNNFNENNLKNNNNRNGNNNNNNNNNNNNNNNNNNNNNNNNNNNNN). Positions 99–109 (QKKKKKKRRVK) are enriched in basic residues.

This is an uncharacterized protein from Dictyostelium discoideum (Social amoeba).